We begin with the raw amino-acid sequence, 350 residues long: Type II restriction enzyme NgoBI (350 aa).

The catalysed reaction is Endonucleolytic cleavage of DNA to give specific double-stranded fragments with terminal 5'-phosphates.. In terms of biological role, a P subtype restriction enzyme that recognizes the double-stranded sequence 5'-RGCGCY-3'; the cleavage site is unknown. The protein is Type II restriction enzyme NgoBI (ngoBIR) of Neisseria gonorrhoeae.